The following is a 414-amino-acid chain: Phosphopentomutase (414 aa).

Mn(2+)-binding residues include D10, D309, H314, D350, H351, and H362.

It belongs to the phosphopentomutase family. Requires Mn(2+) as cofactor.

The protein localises to the cytoplasm. The catalysed reaction is 2-deoxy-alpha-D-ribose 1-phosphate = 2-deoxy-D-ribose 5-phosphate. The enzyme catalyses alpha-D-ribose 1-phosphate = D-ribose 5-phosphate. Its pathway is carbohydrate degradation; 2-deoxy-D-ribose 1-phosphate degradation; D-glyceraldehyde 3-phosphate and acetaldehyde from 2-deoxy-alpha-D-ribose 1-phosphate: step 1/2. In terms of biological role, isomerase that catalyzes the conversion of deoxy-ribose 1-phosphate (dRib-1-P) and ribose 1-phosphate (Rib-1-P) to deoxy-ribose 5-phosphate (dRib-5-P) and ribose 5-phosphate (Rib-5-P), respectively. This chain is Phosphopentomutase, found in Hahella chejuensis (strain KCTC 2396).